A 245-amino-acid chain; its full sequence is Phosducin (245 aa).

Residues 1–14 (MEEAKSQSLEEDFE) show a composition bias toward acidic residues. A disordered region spans residues 1–68 (MEEAKSQSLE…RDNKDSKERF (68 aa)). Positions 1 to 241 (MEEAKSQSLE…THALDQTNME (241 aa)) constitute a Phosducin domain. Positions 59–68 (RDNKDSKERF) are enriched in basic and acidic residues. At serine 73 the chain carries Phosphoserine; by PKA. A thioredoxin fold region spans residues 111–245 (YGFVYELETG…DQTNMEEDIE (135 aa)).

It belongs to the phosducin family. As to quaternary structure, interacts with CRX. Forms a complex with the beta and gamma subunits of the GTP-binding protein, transducin. Post-translationally, light-induced changes in cyclic nucleotide levels modulate the phosphorylation of this protein by cAMP kinase.

The protein resides in the cytoplasm. It is found in the cytosol. Its subcellular location is the nucleus. It localises to the cell projection. The protein localises to the cilium. The protein resides in the photoreceptor outer segment. It is found in the photoreceptor inner segment. Functionally, inhibits the transcriptional activation activity of the cone-rod homeobox CRX. May participate in the regulation of visual phototransduction or in the integration of photoreceptor metabolism. This Felis catus (Cat) protein is Phosducin (PDC).